The chain runs to 106 residues: Transcription factor TRY (106 aa).

In terms of domain architecture, Myb-like spans 34–71; the sequence is TEQEEDLIFRMYRLVGDRWDLIAGRVPGRQPEEIERYW. A disordered region spans residues 83 to 106; sequence RRQLHSSSHKHTKPHRPRFSIYPS. Over residues 84–100 the composition is skewed to basic residues; it reads RQLHSSSHKHTKPHRPR.

In terms of assembly, interacts with GL3 and thus prevents GL1 GL3 interaction. Also interacts with BHLH2. In terms of tissue distribution, expressed in roots, leaves, siliques and inflorescences.

The protein localises to the nucleus. Transcription factor. Involved in epidermal cell fate specification. Negative regulator of trichome development, including endoreplication, by lateral inhibition involving intercellular interactions. Promotes the formation of hair developing cells (trichoblasts) in H position in root epidermis, probably by inhibiting non-hair cell (atrichoblasts) formation. The sequence is that of Transcription factor TRY (TRY) from Arabidopsis thaliana (Mouse-ear cress).